A 673-amino-acid chain; its full sequence is Ion-translocating oxidoreductase complex subunit C (673 aa).

4Fe-4S ferredoxin-type domains lie at 368 to 397 (MGAP…QQLY) and 407 to 436 (KATA…VQYF). [4Fe-4S] cluster-binding residues include C377, C380, C383, C387, C416, C419, C422, and C426. 2 disordered regions span residues 534 to 553 (QARA…SGGA) and 563 to 653 (IARA…AAVA).

This sequence belongs to the 4Fe4S bacterial-type ferredoxin family. RnfC subfamily. In terms of assembly, the complex is composed of six subunits: RsxA, RsxB, RsxC, RsxD, RsxE and RsxG. The cofactor is [4Fe-4S] cluster.

The protein localises to the cell inner membrane. Its function is as follows. Part of a membrane-bound complex that couples electron transfer with translocation of ions across the membrane. Required to maintain the reduced state of SoxR. The protein is Ion-translocating oxidoreductase complex subunit C of Salmonella gallinarum (strain 287/91 / NCTC 13346).